A 291-amino-acid polypeptide reads, in one-letter code: Transcription factor TYE7 (291 aa).

A disordered region spans residues 89–109; that stretch reads FPTDQFFSNPSSYSHSPEVSS. Low complexity predominate over residues 96–109; that stretch reads SNPSSYSHSPEVSS. Ser104 bears the Phosphoserine mark. The bHLH domain occupies 180 to 265; the sequence is FQKQAHNKIE…EKAVDYILYL (86 aa). DNA is bound by residues His185, Glu189, and Arg193. The interval 221-245 is disordered; it reads DSVKKQDEDGAETAATTPLPSAAAT. The span at 233-245 shows a compositional bias: low complexity; the sequence is TAATTPLPSAAAT. Thr237 bears the Phosphothreonine mark.

As to quaternary structure, homodimer. Efficient DNA binding requires dimerization with another bHLH protein.

The protein localises to the nucleus. In terms of biological role, transcriptional activator of glycolytic gene expression, such as enolase genes (ENO1 and ENO2), glyceraldehyde-3-phosphate dehydrogenase gene (TDH), phosphoglycerate kinase (PGK1), phosphoglycerate mutase (PGM1), pyruvate kinase (PYK1) and triosephosphate isomerase (TPI1) genes. Binds DNA on E-box motifs: 5'-CANNTG-3'. In response to adenylic nucleotide reduction, activates Ty1 mRNA transcription, possibly by controlling Ty1 antisense transcription. Acts as a cell cycle transcription factor. Its function may also be linked to sulfur metabolism and the cross-regulation between phosphate and sulfate metabolism. This is Transcription factor TYE7 from Saccharomyces cerevisiae (strain ATCC 204508 / S288c) (Baker's yeast).